A 377-amino-acid chain; its full sequence is Homoserine O-acetyltransferase (377 aa).

Residues Asn-47–Glu-355 form the AB hydrolase-1 domain. The active-site Nucleophile is Ser-153. Arg-222 contacts substrate. Residues Asp-316 and His-349 contribute to the active site. Asp-350 contributes to the substrate binding site.

It belongs to the AB hydrolase superfamily. MetX family. As to quaternary structure, homodimer.

Its subcellular location is the cytoplasm. The enzyme catalyses L-homoserine + acetyl-CoA = O-acetyl-L-homoserine + CoA. It participates in amino-acid biosynthesis; L-methionine biosynthesis via de novo pathway; O-acetyl-L-homoserine from L-homoserine: step 1/1. In terms of biological role, transfers an acetyl group from acetyl-CoA to L-homoserine, forming acetyl-L-homoserine. This chain is Homoserine O-acetyltransferase, found in Deferribacter desulfuricans (strain DSM 14783 / JCM 11476 / NBRC 101012 / SSM1).